The chain runs to 205 residues: Meiotic nuclear division protein 1 homolog (205 aa).

S2 carries the post-translational modification N-acetylserine. Positions 83–173 (KRKLEALNSQ…EAANRWTDNI (91 aa)) form a coiled coil.

Belongs to the MND1 family. In terms of assembly, heterodimer with PSMC3IP/HOP2. MND1-PSMC3IP interacts with DMC1 and RAD51 and binds to ssDNA and dsDNA showing no preference for either form of DNA.

Its subcellular location is the nucleus. Its function is as follows. Required for proper homologous chromosome pairing and efficient cross-over and intragenic recombination during meiosis. Stimulates both DMC1- and RAD51-mediated homologous strand assimilation, which is required for the resolution of meiotic double-strand breaks. This is Meiotic nuclear division protein 1 homolog from Mus musculus (Mouse).